The chain runs to 662 residues: Methyl-accepting chemotaxis protein TlpB (662 aa).

Over 1 to 16 (MGKFIQWIKQPSISKP) the chain is Cytoplasmic. The chain crosses the membrane as a helical span at residues 17-37 (LIAAFLAVLILPVGVLAYFSY). At 38–281 (QSAWNALDRE…LQDASSPVLN (244 aa)) the chain is on the extracellular side. In terms of domain architecture, Cache spans 153–228 (SEPYTDEATG…KPGTTGSGDW (76 aa)). The helical transmembrane segment at 282 to 302 (TAVIILCVSIVIGGILILYII) threads the bilayer. Residues 303–355 (RAITKPLRKLVSTSAKISSGDLTEVIDIHSKNEFGQLGESFNEMSASLRSVIG) enclose the HAMP domain. Residues 303 to 662 (RAITKPLRKL…DITKKFKIES (360 aa)) are Cytoplasmic-facing. Residue E370 is modified to Glutamate methyl ester (Glu). Residues 374–610 (SAAQTSKATE…EVSSAVEDIS (237 aa)) form the Methyl-accepting transducer domain. Q594 carries the glutamate methyl ester (Gln) modification. Glutamate methyl ester (Glu) occurs at positions 629 and 636.

The protein belongs to the methyl-accepting chemotaxis (MCP) protein family.

Its subcellular location is the cell membrane. Its function is as follows. Chemotactic-signal transducers respond to changes in the concentration of attractants and repellents in the environment, transduce a signal from the outside to the inside of the cell, and facilitate sensory adaptation through the variation of the level of methylation. All amino acids serve as attractants in B.subtilis, they appear to cause an increase in the turnover methyl groups, leading to methylation of an unidentified acceptor, while repellents have been shown to cause a decrease in methyl group turnover. The methyl groups are added by a methyltransferase and removed by a methylesterase. This is Methyl-accepting chemotaxis protein TlpB (tlpB) from Bacillus subtilis (strain 168).